The primary structure comprises 357 residues: MNEFGDSMIRTLIVDDSAFMRMAIRSMLASSPDIKIAGDACNGKEAVDKSKSLHPDIIIMDVNMPVMDGLTAVKTIMSTDPVPIIMFSTLTVEGSKEALEALQLGAIDFVPKSESHHDVNKIEKELVDKIRNIHSSNPSILRLINMRKFKGEVVRGKWSCAGDFAVLIGSSTGGPSSLEQVIPRLPGDLPAPVFVVQHMPEGNFCKQLAERLNFLSELEIKEARNNEKVTAGVVYIAPGGYHMTVKKALGVTRIKLIKSQPVHAVMPAVDVIAESMLDVYGKNIVAAILTGMGFDGAAGFKKIRDAGGSTIACSEDTCVIFGMPKAAIAAGGIDTVKPIFEIPEEIVRMSEVKCNGK.

Residues 10–127 form the Response regulatory domain; sequence RTLIVDDSAF…DVNKIEKELV (118 aa). 4-aspartylphosphate is present on Asp61. Residues 159 to 353 form the CheB-type methylesterase domain; it reads SCAGDFAVLI…EEIVRMSEVK (195 aa). Active-site residues include Ser171, His198, and Asp295.

Belongs to the CheB family. Phosphorylated by CheA. Phosphorylation of the N-terminal regulatory domain activates the methylesterase activity.

The protein localises to the cytoplasm. The enzyme catalyses [protein]-L-glutamate 5-O-methyl ester + H2O = L-glutamyl-[protein] + methanol + H(+). It carries out the reaction L-glutaminyl-[protein] + H2O = L-glutamyl-[protein] + NH4(+). Involved in chemotaxis. Part of a chemotaxis signal transduction system that modulates chemotaxis in response to various stimuli. Catalyzes the demethylation of specific methylglutamate residues introduced into the chemoreceptors (methyl-accepting chemotaxis proteins or MCP) by CheR. Also mediates the irreversible deamidation of specific glutamine residues to glutamic acid. The sequence is that of Protein-glutamate methylesterase/protein-glutamine glutaminase 1 from Methanosarcina mazei (strain ATCC BAA-159 / DSM 3647 / Goe1 / Go1 / JCM 11833 / OCM 88) (Methanosarcina frisia).